Here is a 179-residue protein sequence, read N- to C-terminus: Large ribosomal subunit protein uL6 (179 aa).

The protein belongs to the universal ribosomal protein uL6 family. Part of the 50S ribosomal subunit.

This protein binds to the 23S rRNA, and is important in its secondary structure. It is located near the subunit interface in the base of the L7/L12 stalk, and near the tRNA binding site of the peptidyltransferase center. This chain is Large ribosomal subunit protein uL6, found in Gloeothece citriformis (strain PCC 7424) (Cyanothece sp. (strain PCC 7424)).